The sequence spans 206 residues: Holliday junction branch migration complex subunit RuvA (206 aa).

A domain I region spans residues 1–67; that stretch reads MIASIFGKIT…QILEEGFAFN (67 aa). Residues 68-141 are domain II; that stretch reads TLEEKEWFSK…YDRDDGGKRI (74 aa). A flexible linker region spans residues 141–145; it reads IKPNT. The segment at 146–206 is domain III; it reads AMANDYDEMF…QNNEVTNKTA (61 aa).

It belongs to the RuvA family. In terms of assembly, homotetramer. Forms an RuvA(8)-RuvB(12)-Holliday junction (HJ) complex. HJ DNA is sandwiched between 2 RuvA tetramers; dsDNA enters through RuvA and exits via RuvB. An RuvB hexamer assembles on each DNA strand where it exits the tetramer. Each RuvB hexamer is contacted by two RuvA subunits (via domain III) on 2 adjacent RuvB subunits; this complex drives branch migration. In the full resolvosome a probable DNA-RuvA(4)-RuvB(12)-RuvC(2) complex forms which resolves the HJ.

The protein resides in the cytoplasm. Its function is as follows. The RuvA-RuvB-RuvC complex processes Holliday junction (HJ) DNA during genetic recombination and DNA repair, while the RuvA-RuvB complex plays an important role in the rescue of blocked DNA replication forks via replication fork reversal (RFR). RuvA specifically binds to HJ cruciform DNA, conferring on it an open structure. The RuvB hexamer acts as an ATP-dependent pump, pulling dsDNA into and through the RuvAB complex. HJ branch migration allows RuvC to scan DNA until it finds its consensus sequence, where it cleaves and resolves the cruciform DNA. The protein is Holliday junction branch migration complex subunit RuvA of Mycoplasma pneumoniae (strain ATCC 29342 / M129 / Subtype 1) (Mycoplasmoides pneumoniae).